The primary structure comprises 122 residues: Alpha-amylase/trypsin inhibitor (122 aa).

Cystine bridges form between Cys6-Cys55, Cys20-Cys44, Cys29-Cys85, Cys45-Cys103, and Cys57-Cys114.

It belongs to the protease inhibitor I6 (cereal trypsin/alpha-amylase inhibitor) family. Seeds.

Its subcellular location is the secreted. Its function is as follows. May play a protective role against endo- and exogenous hydrolytic activities in the Ragi seeds. In Eleusine coracana (Indian finger millet), this protein is Alpha-amylase/trypsin inhibitor.